A 34-amino-acid polypeptide reads, in one-letter code: MEVNILAFIATALFILVPTAFLLIIYVKTISQSD.

Residues Ile5 to Ile25 form a helical membrane-spanning segment.

It belongs to the PsbM family. In terms of assembly, PSII is composed of 1 copy each of membrane proteins PsbA, PsbB, PsbC, PsbD, PsbE, PsbF, PsbH, PsbI, PsbJ, PsbK, PsbL, PsbM, PsbT, PsbX, PsbY, PsbZ, Psb30/Ycf12, at least 3 peripheral proteins of the oxygen-evolving complex and a large number of cofactors. It forms dimeric complexes.

Its subcellular location is the plastid. It localises to the chloroplast thylakoid membrane. Functionally, one of the components of the core complex of photosystem II (PSII). PSII is a light-driven water:plastoquinone oxidoreductase that uses light energy to abstract electrons from H(2)O, generating O(2) and a proton gradient subsequently used for ATP formation. It consists of a core antenna complex that captures photons, and an electron transfer chain that converts photonic excitation into a charge separation. This subunit is found at the monomer-monomer interface. The chain is Photosystem II reaction center protein M from Cucumis sativus (Cucumber).